The chain runs to 291 residues: MAKGRVAERSQLGAHHTTPVGDGAAGTRGLAAPGSRDHQKEKSWVEAGSARMSLLILVSIFLSAAFVMFLVYKNFPQLSEEERVNMKVPRDMDDAKALGKVLSKYKDTFYVQVLVAYFATYIFLQTFAIPGSIFLSILSGFLYPFPLALFLVCLCSGLGASFCYMLSYLVGRPVVYKYLTEKAVKWSQQVERHREHLINYIIFLRITPFLPNWFINITSPVINVPLKVFFIGTFLGVAPPSFVAIKAGTTLYQLTTAGEAVSWNSIFILMILAVLSILPAIFQKKLKQKFE.

The tract at residues 1–39 is disordered; sequence MAKGRVAERSQLGAHHTTPVGDGAAGTRGLAAPGSRDHQ. Residue Thr18 is modified to Phosphothreonine. At Ser35 the chain carries Phosphoserine. The next 6 helical transmembrane spans lie at 52–72, 109–129, 147–169, 197–217, 225–245, and 262–282; these read MSLLILVSIFLSAAFVMFLVY, FYVQVLVAYFATYIFLQTFAI, LALFLVCLCSGLGASFCYMLSYL, LINYIIFLRITPFLPNWFINI, PLKVFFIGTFLGVAPPSFVAI, and SWNSIFILMILAVLSILPAIF. Residues 140–251 are VTT domain; required for its function in autophagy; it reads GFLYPFPLAL…FVAIKAGTTL (112 aa).

This sequence belongs to the TMEM41 family. In terms of assembly, interacts with VMP1. Interacts with COPA, COPB1, VDAC1 and ERLIN2. Interacts with ATG2A. Interacts with SURF4. As to quaternary structure, (Microbial infection) Interacts with Zika virus NS4A protein and Yellow fever virus NS4B protein.

It localises to the endoplasmic reticulum membrane. The protein resides in the endomembrane system. Its subcellular location is the cytoplasm. It catalyses the reaction a 1,2-diacyl-sn-glycero-3-phospho-L-serine(in) = a 1,2-diacyl-sn-glycero-3-phospho-L-serine(out). It carries out the reaction cholesterol(in) = cholesterol(out). The enzyme catalyses a 1,2-diacyl-sn-glycero-3-phosphocholine(in) = a 1,2-diacyl-sn-glycero-3-phosphocholine(out). The catalysed reaction is a 1,2-diacyl-sn-glycero-3-phosphoethanolamine(in) = a 1,2-diacyl-sn-glycero-3-phosphoethanolamine(out). Phospholipid scramblase involved in lipid homeostasis and membrane dynamics processes. Has phospholipid scramblase activity toward cholesterol and phosphatidylserine, as well as phosphatidylethanolamine and phosphatidylcholine. Required for autophagosome formation: participates in early stages of autophagosome biogenesis at the endoplasmic reticulum (ER) membrane by reequilibrating the leaflets of the ER as lipids are extracted by ATG2 (ATG2A or ATG2B) to mediate autophagosome assembly. In addition to autophagy, involved in other processes in which phospholipid scramblase activity is required. Required for normal motor neuron development. In terms of biological role, (Microbial infection) Critical host factor required for infection by human coronaviruses SARS-CoV-2, HCoV-OC43, HCoV-NL63, and HCoV-229E, as well as all flaviviruses tested such as Zika virus and Yellow fever virus. Required post-entry of the virus to facilitate the ER membrane remodeling necessary to form replication organelles. The protein is Transmembrane protein 41B of Homo sapiens (Human).